The following is a 374-amino-acid chain: Chaperone protein DnaJ (374 aa).

Residues 4–68 form the J domain; it reads DYYDILGVSR…QMRGRYDQFG (65 aa). Residues 133–215 form a CR-type zinc finger; it reads GGEQQIRISH…CGGRGQNQVS (83 aa). 8 residues coordinate Zn(2+): cysteine 146, cysteine 149, cysteine 163, cysteine 166, cysteine 189, cysteine 192, cysteine 203, and cysteine 206. CXXCXGXG motif repeat units lie at residues 146 to 153, 163 to 170, 189 to 196, and 203 to 210; these read CKTCEGTG, CSTCQGSG, CPTCNGQG, and CDSCGGRG.

Belongs to the DnaJ family. In terms of assembly, homodimer. The cofactor is Zn(2+).

It localises to the cytoplasm. In terms of biological role, participates actively in the response to hyperosmotic and heat shock by preventing the aggregation of stress-denatured proteins and by disaggregating proteins, also in an autonomous, DnaK-independent fashion. Unfolded proteins bind initially to DnaJ; upon interaction with the DnaJ-bound protein, DnaK hydrolyzes its bound ATP, resulting in the formation of a stable complex. GrpE releases ADP from DnaK; ATP binding to DnaK triggers the release of the substrate protein, thus completing the reaction cycle. Several rounds of ATP-dependent interactions between DnaJ, DnaK and GrpE are required for fully efficient folding. Also involved, together with DnaK and GrpE, in the DNA replication of plasmids through activation of initiation proteins. The sequence is that of Chaperone protein DnaJ from Acaryochloris marina (strain MBIC 11017).